The sequence spans 226 residues: Cytidylate kinase (226 aa).

Residue Gly-10–Thr-18 coordinates ATP.

This sequence belongs to the cytidylate kinase family. Type 1 subfamily.

It localises to the cytoplasm. It carries out the reaction CMP + ATP = CDP + ADP. The catalysed reaction is dCMP + ATP = dCDP + ADP. This Streptococcus equi subsp. zooepidemicus (strain MGCS10565) protein is Cytidylate kinase.